A 210-amino-acid chain; its full sequence is Large ribosomal subunit protein uL4 (210 aa).

Residues 46–89 (QGTASTLTRSEVRGGGRKPYKQKGTGRARQGSIRTPLRPGGGII) are disordered. Residues 60-71 (GGRKPYKQKGTG) show a composition bias toward basic residues.

This sequence belongs to the universal ribosomal protein uL4 family. Part of the 50S ribosomal subunit.

Functionally, one of the primary rRNA binding proteins, this protein initially binds near the 5'-end of the 23S rRNA. It is important during the early stages of 50S assembly. It makes multiple contacts with different domains of the 23S rRNA in the assembled 50S subunit and ribosome. Its function is as follows. Forms part of the polypeptide exit tunnel. The protein is Large ribosomal subunit protein uL4 of Prochlorococcus marinus (strain MIT 9215).